The sequence spans 420 residues: MQELSQLGGYFQKLAAGGFVINPSSSSSSSNNSSSNTSSSNFLSPYEYQESSTSPRDTTDSSGESSLSSSGSSSSLNGSCNVAAKLIKFRGHNVAAFDINGKEMICLPQVYEVFLKNMVGGLHTVYTKLKRLYIHPMVCNVEQVRALRSLGAIQPGVNRCKLLKTSDFEKLYDDCTSTCTRPGRPSKRSFDDWNNGAVIIKKDKTDSEPVNGPVFNQLMQPQMTPQQILMQHFVALSQKTKNSFERADDDDQNQRDADDITPLNLSKSGGNSENDSDSLENMRKEDSSPNTSVSDRGGSNSNSLSMSMEAGSSSSSGKNDEASMMNKVMSLIELASQQFKHEREELWKERSEIQVLRESFHKIVQEERDLRKKLETQNKKCTAFEKRYKYVKKQLLLANADLRRYKEKEEQSSDGNSVEL.

Residues 23–77 form a disordered region; that stretch reads PSSSSSSSNNSSSNTSSSNFLSPYEYQESSTSPRDTTDSSGESSLSSSGSSSSLN. Low complexity-rich tracts occupy residues 24 to 41 and 51 to 77; these read SSSS…SSSN and SSTS…SSLN. A DACHbox-N region spans residues 85–171; the sequence is KLIKFRGHNV…LLKTSDFEKL (87 aa). A compositionally biased stretch (basic and acidic residues) spans 242 to 258; that stretch reads NSFERADDDDQNQRDAD. The disordered stretch occupies residues 242 to 321; sequence NSFERADDDD…SSSSSGKNDE (80 aa). Residues 263–273 are compositionally biased toward polar residues; the sequence is LNLSKSGGNSE. Over residues 297-317 the composition is skewed to low complexity; the sequence is GGSNSNSLSMSMEAGSSSSSG.

The protein belongs to the DACH/dachshund family. Expressed in AFD, AWC, ASE and ASK neurons. Expressed in the alae.

It localises to the nucleus. In terms of biological role, transcription factor. Plays a role in the thermotactic response. This chain is Dachshund homolog dac-1, found in Caenorhabditis elegans.